The primary structure comprises 309 residues: Lipoyl synthase (309 aa).

Residues Cys-56, Cys-61, Cys-67, Cys-82, Cys-86, Cys-89, and Ser-296 each coordinate [4Fe-4S] cluster. Residues Phe-68 to Ser-285 enclose the Radical SAM core domain.

It belongs to the radical SAM superfamily. Lipoyl synthase family. [4Fe-4S] cluster is required as a cofactor.

It localises to the cytoplasm. It carries out the reaction [[Fe-S] cluster scaffold protein carrying a second [4Fe-4S](2+) cluster] + N(6)-octanoyl-L-lysyl-[protein] + 2 oxidized [2Fe-2S]-[ferredoxin] + 2 S-adenosyl-L-methionine + 4 H(+) = [[Fe-S] cluster scaffold protein] + N(6)-[(R)-dihydrolipoyl]-L-lysyl-[protein] + 4 Fe(3+) + 2 hydrogen sulfide + 2 5'-deoxyadenosine + 2 L-methionine + 2 reduced [2Fe-2S]-[ferredoxin]. The protein operates within protein modification; protein lipoylation via endogenous pathway; protein N(6)-(lipoyl)lysine from octanoyl-[acyl-carrier-protein]: step 2/2. Its function is as follows. Catalyzes the radical-mediated insertion of two sulfur atoms into the C-6 and C-8 positions of the octanoyl moiety bound to the lipoyl domains of lipoate-dependent enzymes, thereby converting the octanoylated domains into lipoylated derivatives. The polypeptide is Lipoyl synthase (Syntrophotalea carbinolica (strain DSM 2380 / NBRC 103641 / GraBd1) (Pelobacter carbinolicus)).